The following is a 78-amino-acid chain: Large ribosomal subunit protein bL28 (78 aa).

It belongs to the bacterial ribosomal protein bL28 family.

This Proteus mirabilis (strain HI4320) protein is Large ribosomal subunit protein bL28.